We begin with the raw amino-acid sequence, 430 residues long: ATP-dependent RNA helicase RhlB (430 aa).

A Q motif motif is present at residues 9-37 (QKFSDFALHPQVIEALESKGFHNCTPIQA). Positions 40 to 219 (LPLALSGRDV…FEQMNNAEYV (180 aa)) constitute a Helicase ATP-binding domain. Residue 53 to 60 (AQTGTGKT) participates in ATP binding. The short motif at 165–168 (DEAD) is the DEAD box element. Residues 245–390 (RLLQTLLEEE…VSKYNSDALM (146 aa)) enclose the Helicase C-terminal domain. The tract at residues 392–430 (DLPAPKRLTRPPRSNNGPRRHNNAPRRSGAPRNNRKRAD) is disordered.

The protein belongs to the DEAD box helicase family. RhlB subfamily. Component of the RNA degradosome, which is a multiprotein complex involved in RNA processing and mRNA degradation.

It localises to the cytoplasm. It carries out the reaction ATP + H2O = ADP + phosphate + H(+). In terms of biological role, DEAD-box RNA helicase involved in RNA degradation. Has RNA-dependent ATPase activity and unwinds double-stranded RNA. This is ATP-dependent RNA helicase RhlB from Pectobacterium carotovorum subsp. carotovorum (strain PC1).